Reading from the N-terminus, the 203-residue chain is Outer-membrane lipoprotein carrier protein (203 aa).

Residues 1 to 21 (MKKIAITCALLSSLVASSVWA) form the signal peptide.

Belongs to the LolA family. Monomer.

It localises to the periplasm. Participates in the translocation of lipoproteins from the inner membrane to the outer membrane. Only forms a complex with a lipoprotein if the residue after the N-terminal Cys is not an aspartate (The Asp acts as a targeting signal to indicate that the lipoprotein should stay in the inner membrane). The sequence is that of Outer-membrane lipoprotein carrier protein from Escherichia coli O139:H28 (strain E24377A / ETEC).